We begin with the raw amino-acid sequence, 391 residues long: Putative B3 domain-containing protein Os08g0325100 (391 aa).

A DNA-binding region (TF-B3) is located at residues 32–125 (GDFQHEIRGE…QFDVIIFDQV (94 aa)). The tract at residues 143–232 (VQEGRTDATE…SSRAHPQPMP (90 aa)) is disordered. Residues 172 to 226 (EGRTNATETLNSSRAHSQPMPMQTPATETLNSSRAHSQDMPMQSPATETLNSSRA) show a composition bias toward polar residues.

It is found in the nucleus. The polypeptide is Putative B3 domain-containing protein Os08g0325100 (Oryza sativa subsp. japonica (Rice)).